A 38-amino-acid polypeptide reads, in one-letter code: Potassium channel toxin alpha-KTx 3.11 (38 aa).

Intrachain disulfides connect Cys-8/Cys-28, Cys-14/Cys-33, and Cys-18/Cys-35.

This sequence belongs to the short scorpion toxin superfamily. Potassium channel inhibitor family. Alpha-KTx 03 subfamily. Expressed by the venom gland.

It localises to the secreted. In terms of biological role, blocks the voltage-gated potassium channel Kv1.3/KCNA3 (IC(50)=7.2 nM). Correnti and colleagues have also shown that this toxin inhibits Kv1.1/KCNA1, which is different from Abdel-Mottaleb and colleagues conclusions. This is Potassium channel toxin alpha-KTx 3.11 from Odontobuthus doriae (Yellow Iranian scorpion).